We begin with the raw amino-acid sequence, 269 residues long: Shikimate dehydrogenase (NADP(+)) (269 aa).

Shikimate-binding positions include 15 to 17 (SLS) and T62. Residue K66 is the Proton acceptor of the active site. Shikimate is bound by residues N86 and D100. NADP(+) contacts are provided by residues 124-128 (GAGGA), 147-152 (NRTPER), and I211. A shikimate-binding site is contributed by Y213. G234 contributes to the NADP(+) binding site.

This sequence belongs to the shikimate dehydrogenase family. In terms of assembly, homodimer.

The catalysed reaction is shikimate + NADP(+) = 3-dehydroshikimate + NADPH + H(+). The protein operates within metabolic intermediate biosynthesis; chorismate biosynthesis; chorismate from D-erythrose 4-phosphate and phosphoenolpyruvate: step 4/7. Its function is as follows. Involved in the biosynthesis of the chorismate, which leads to the biosynthesis of aromatic amino acids. Catalyzes the reversible NADPH linked reduction of 3-dehydroshikimate (DHSA) to yield shikimate (SA). The polypeptide is Shikimate dehydrogenase (NADP(+)) (Methanococcoides burtonii (strain DSM 6242 / NBRC 107633 / OCM 468 / ACE-M)).